We begin with the raw amino-acid sequence, 165 residues long: MSGSIDQLSHLDAAGRARMVDVGNKAVTAREAIARGRVVMQPATLQLIVSGGMPKGDVLAVARVAGIMAAKRTAELIPLCHLLNLSHASVNFTPDPAGNALEIEATVRCTGQTGVEMEALTAVSIAALTIYDMCKAVDKTMQIDGIRLIAKRGGRSGDWQREESA.

Residues 79–81 and 117–118 each bind substrate; these read LCH and ME. Asp132 is a catalytic residue.

Belongs to the MoaC family. Homohexamer; trimer of dimers.

The catalysed reaction is (8S)-3',8-cyclo-7,8-dihydroguanosine 5'-triphosphate = cyclic pyranopterin phosphate + diphosphate. The protein operates within cofactor biosynthesis; molybdopterin biosynthesis. Catalyzes the conversion of (8S)-3',8-cyclo-7,8-dihydroguanosine 5'-triphosphate to cyclic pyranopterin monophosphate (cPMP). This is Cyclic pyranopterin monophosphate synthase from Chloroflexus aggregans (strain MD-66 / DSM 9485).